Reading from the N-terminus, the 425-residue chain is Serine--tRNA ligase (425 aa).

Residue 229-231 (TSE) participates in L-serine binding. ATP-binding positions include 259-261 (RKE) and V275. Residue E282 participates in L-serine binding. 349–352 (EVTS) lines the ATP pocket. An L-serine-binding site is contributed by T384.

The protein belongs to the class-II aminoacyl-tRNA synthetase family. Type-1 seryl-tRNA synthetase subfamily. Homodimer. The tRNA molecule binds across the dimer.

It localises to the cytoplasm. It carries out the reaction tRNA(Ser) + L-serine + ATP = L-seryl-tRNA(Ser) + AMP + diphosphate + H(+). It catalyses the reaction tRNA(Sec) + L-serine + ATP = L-seryl-tRNA(Sec) + AMP + diphosphate + H(+). It functions in the pathway aminoacyl-tRNA biosynthesis; selenocysteinyl-tRNA(Sec) biosynthesis; L-seryl-tRNA(Sec) from L-serine and tRNA(Sec): step 1/1. Functionally, catalyzes the attachment of serine to tRNA(Ser). Is also able to aminoacylate tRNA(Sec) with serine, to form the misacylated tRNA L-seryl-tRNA(Sec), which will be further converted into selenocysteinyl-tRNA(Sec). The polypeptide is Serine--tRNA ligase (Borreliella burgdorferi (strain ATCC 35210 / DSM 4680 / CIP 102532 / B31) (Borrelia burgdorferi)).